Reading from the N-terminus, the 157-residue chain is Large ribosomal subunit protein uL13m (157 aa).

A mitochondrion-targeting transit peptide spans 1 to 29 (MSTLNGQTALAYAKVWHHVSAKNVPLGRL).

It belongs to the universal ribosomal protein uL13 family. As to quaternary structure, component of the mitochondrial large ribosomal subunit (mt-LSU). Mature yeast 74S mitochondrial ribosomes consist of a small (37S) and a large (54S) subunit. The 37S small subunit contains a 15S ribosomal RNA (15S mt-rRNA) and at least 32 different proteins. The 54S large subunit contains a 21S rRNA (21S mt-rRNA) and at least 45 different proteins.

It is found in the mitochondrion. Functionally, component of the mitochondrial ribosome (mitoribosome), a dedicated translation machinery responsible for the synthesis of mitochondrial genome-encoded proteins, including at least some of the essential transmembrane subunits of the mitochondrial respiratory chain. The mitoribosomes are attached to the mitochondrial inner membrane and translation products are cotranslationally integrated into the membrane. The chain is Large ribosomal subunit protein uL13m from Schizosaccharomyces pombe (strain 972 / ATCC 24843) (Fission yeast).